Here is a 185-residue protein sequence, read N- to C-terminus: Ribosome-recycling factor (185 aa).

Residues 132–152 (RRDANEQLKKMEKDSELTEDD) are disordered.

The protein belongs to the RRF family.

The protein localises to the cytoplasm. In terms of biological role, responsible for the release of ribosomes from messenger RNA at the termination of protein biosynthesis. May increase the efficiency of translation by recycling ribosomes from one round of translation to another. The chain is Ribosome-recycling factor from Alkaliphilus metalliredigens (strain QYMF).